The chain runs to 95 residues: Protein TusB (95 aa).

The protein belongs to the DsrH/TusB family. As to quaternary structure, heterohexamer, formed by a dimer of trimers. The hexameric TusBCD complex contains 2 copies each of TusB, TusC and TusD. The TusBCD complex interacts with TusE.

The protein localises to the cytoplasm. In terms of biological role, part of a sulfur-relay system required for 2-thiolation of 5-methylaminomethyl-2-thiouridine (mnm(5)s(2)U) at tRNA wobble positions. This chain is Protein TusB, found in Serratia proteamaculans (strain 568).